The following is a 287-amino-acid chain: MNKSIAPAPVVAAGDVKFGNALPLSVIAGPCQLESRAHALEVAAALQEIGKRLGIGIVYKTSFDKANRTSAASARGIGLDGALPIFAEIRDSIGLPVLTDVHEAGQCARAAEAVDILQIPAFLCRQTDLLLAAAATGRIVNVKKGQFLAPWDMGNVVAKITSAGNPKVLVTERGVSFGYNTLVSDMRALPIMAKTTGAPVIFDATHSVQQPGGKGTSSGGEREFVPVLARAAVAVGVAGVFIETHPDPDHAPSDGPNMVPLRDFESLLRTLMEFDALAKRRSGAGTI.

Belongs to the KdsA family.

The protein resides in the cytoplasm. The enzyme catalyses D-arabinose 5-phosphate + phosphoenolpyruvate + H2O = 3-deoxy-alpha-D-manno-2-octulosonate-8-phosphate + phosphate. It participates in carbohydrate biosynthesis; 3-deoxy-D-manno-octulosonate biosynthesis; 3-deoxy-D-manno-octulosonate from D-ribulose 5-phosphate: step 2/3. It functions in the pathway bacterial outer membrane biogenesis; lipopolysaccharide biosynthesis. The polypeptide is 2-dehydro-3-deoxyphosphooctonate aldolase (Rhodopseudomonas palustris (strain HaA2)).